The chain runs to 206 residues: Large ribosomal subunit protein uL4 (206 aa).

This sequence belongs to the universal ribosomal protein uL4 family. As to quaternary structure, part of the 50S ribosomal subunit.

In terms of biological role, one of the primary rRNA binding proteins, this protein initially binds near the 5'-end of the 23S rRNA. It is important during the early stages of 50S assembly. It makes multiple contacts with different domains of the 23S rRNA in the assembled 50S subunit and ribosome. Functionally, forms part of the polypeptide exit tunnel. This is Large ribosomal subunit protein uL4 from Rhodopseudomonas palustris (strain BisA53).